Reading from the N-terminus, the 891-residue chain is DNA mismatch repair protein MutS (891 aa).

Position 639 to 646 (639 to 646 (GPNMAGKS)) interacts with ATP. Residues 827-854 (TIQEARPSAQGSEEKTPSSPAEKGLSLF) form a disordered region.

This sequence belongs to the DNA mismatch repair MutS family.

Functionally, this protein is involved in the repair of mismatches in DNA. It is possible that it carries out the mismatch recognition step. This protein has a weak ATPase activity. In Treponema denticola (strain ATCC 35405 / DSM 14222 / CIP 103919 / JCM 8153 / KCTC 15104), this protein is DNA mismatch repair protein MutS.